We begin with the raw amino-acid sequence, 330 residues long: Aspartate--ammonia ligase (330 aa).

It belongs to the class-II aminoacyl-tRNA synthetase family. AsnA subfamily.

The protein resides in the cytoplasm. The enzyme catalyses L-aspartate + NH4(+) + ATP = L-asparagine + AMP + diphosphate + H(+). The protein operates within amino-acid biosynthesis; L-asparagine biosynthesis; L-asparagine from L-aspartate (ammonia route): step 1/1. The polypeptide is Aspartate--ammonia ligase (Escherichia coli O127:H6 (strain E2348/69 / EPEC)).